The sequence spans 679 residues: Protein hook (679 aa).

One can recognise a Calponin-homology (CH) domain in the interval 6 to 123 (NEMYYSLLEW…RLLQLVLGCA (118 aa)). Coiled-coil stretches lie at residues 135-437 (EIMC…LKCG) and 480-574 (QTAL…QEIL).

It belongs to the hook family. As to quaternary structure, homodimer. Interacts with microtubules via its N-terminus.

It localises to the cytoplasm. Its subcellular location is the cytoskeleton. It is found in the endosome. The protein resides in the synapse. Its function is as follows. Involved in endocytic trafficking by stabilizing organelles of the endocytic pathway. Probably acts as a cytoskeletal linker protein required to tether endosome vesicles to the cytoskeleton. Involved in modulation of endocytosis at stages required for down-regulation of membrane proteins that control synapse size. Not involved in synaptic vesicle recycling. Required in R7 cells for boss endocytosis into multivesicular bodies (MVBs). Has a role in regulating adult longevity. This Drosophila sechellia (Fruit fly) protein is Protein hook.